The sequence spans 581 residues: Arginine--tRNA ligase (581 aa).

Residues Pro122–His132 carry the 'HIGH' region motif.

It belongs to the class-I aminoacyl-tRNA synthetase family. In terms of assembly, monomer.

It is found in the cytoplasm. It catalyses the reaction tRNA(Arg) + L-arginine + ATP = L-arginyl-tRNA(Arg) + AMP + diphosphate. The polypeptide is Arginine--tRNA ligase (Francisella tularensis subsp. holarctica (strain FTNF002-00 / FTA)).